A 416-amino-acid chain; its full sequence is Multifunctional CCA protein (416 aa).

ATP is bound by residues G8 and R11. The CTP site is built by G8 and R11. D21 and D23 together coordinate Mg(2+). Residues R91, R137, and R140 each contribute to the ATP site. Residues R91, R137, and R140 each contribute to the CTP site. Positions 228–329 constitute an HD domain; it reads TGLHTMMVLA…IKLFDKADFW (102 aa).

This sequence belongs to the tRNA nucleotidyltransferase/poly(A) polymerase family. Bacterial CCA-adding enzyme type 1 subfamily. As to quaternary structure, monomer. Can also form homodimers and oligomers. Mg(2+) serves as cofactor. Ni(2+) is required as a cofactor.

The enzyme catalyses a tRNA precursor + 2 CTP + ATP = a tRNA with a 3' CCA end + 3 diphosphate. It carries out the reaction a tRNA with a 3' CCA end + 2 CTP + ATP = a tRNA with a 3' CCACCA end + 3 diphosphate. In terms of biological role, catalyzes the addition and repair of the essential 3'-terminal CCA sequence in tRNAs without using a nucleic acid template. Adds these three nucleotides in the order of C, C, and A to the tRNA nucleotide-73, using CTP and ATP as substrates and producing inorganic pyrophosphate. tRNA 3'-terminal CCA addition is required both for tRNA processing and repair. Also involved in tRNA surveillance by mediating tandem CCA addition to generate a CCACCA at the 3' terminus of unstable tRNAs. While stable tRNAs receive only 3'-terminal CCA, unstable tRNAs are marked with CCACCA and rapidly degraded. In Shewanella sp. (strain MR-4), this protein is Multifunctional CCA protein.